Reading from the N-terminus, the 218-residue chain is Large ribosomal subunit protein bL25 (218 aa).

A disordered region spans residues 186 to 218; it reads AVEEEVPAEDEEIMPEPEVIGEEDEGDEEEPEE.

It belongs to the bacterial ribosomal protein bL25 family. CTC subfamily. As to quaternary structure, part of the 50S ribosomal subunit; part of the 5S rRNA/L5/L18/L25 subcomplex. Contacts the 5S rRNA. Binds to the 5S rRNA independently of L5 and L18.

This is one of the proteins that binds to the 5S RNA in the ribosome where it forms part of the central protuberance. This is Large ribosomal subunit protein bL25 from Halothermothrix orenii (strain H 168 / OCM 544 / DSM 9562).